The sequence spans 142 residues: Deoxyuridine 5'-triphosphate nucleotidohydrolase (142 aa).

Residues 62–64, asparagine 75, and 79–81 each bind substrate; these read RSG and TID.

Belongs to the dUTPase family. Requires Mg(2+) as cofactor.

The enzyme catalyses dUTP + H2O = dUMP + diphosphate + H(+). It participates in pyrimidine metabolism; dUMP biosynthesis; dUMP from dCTP (dUTP route): step 2/2. This enzyme is involved in nucleotide metabolism: it produces dUMP, the immediate precursor of thymidine nucleotides and it decreases the intracellular concentration of dUTP so that uracil cannot be incorporated into DNA. This Clostridium novyi (strain NT) protein is Deoxyuridine 5'-triphosphate nucleotidohydrolase.